Consider the following 952-residue polypeptide: MDEEEHLHRFGTPLPALQKDVVPAKKPVAIEDQIVKDENGKRRFHGAFTGGFSAGFWNTVGSLEGWTPQTFKSSRGERASSKAQLKPEDFMDQEDLGEFGIAPQGIRTRDEFANEDEQKQRSDQRRRKLMQPELGVGAIPGLPVLEQLLRPVRDKVAVRILKSMGWKPGQGVGPRQTRKEKRQATARNSKEQYLMEHYGAEGLPSNKENKGEEDSNNEDEDDEDITFAPDDYEPIFYTPKENRFGMSYSGLNRDPILSKSSSSSAKPMQHINLFGEMEAQANKKQLSIRGQAFGVGAFEEEDEDIYARDDMTRYDFSLADKKPKQKKQQHVQQRHVIDGFSEDNSPAVLQRPYAIDLPRDFQPRNWLQRRSRFAPMDKERAQKLETASEYKRSGLGRHDLNPDQRAQILGEQQQEEKTAEEQPKRNPFKDHSKSLMERINARTEGFTKGGVITENGEEQQTELAKEVKEANAAIQERAALKTKDLPSAMNSSSAFKPFIADEAKQLRYEKFVSSKLTDDKEITEFLARMQPVTLSLWDREMEKKEFIQAAKIYRPLVGLMNDRFVSEANVQAEKVEQQEKPPEERKIVMERTKTMWKPTALLCKRYNIAEPFGGAMLEPEKELKAKAKISVFDYLETSVNTKANFETPSIFPKHIEKSIPEKVETPPSPPPAPQPEAEIQDKPNTKEEPSKHTFVPKTPLEQAVDESRNKPISEKVDLFKSIFEDSDEEETELSEQDKLAILQESFGLPVTSTTSAAAQNVLRNTSPPRGIFASLFSPKIKDAAKEPAPTKFGPIEGSKLKIAYKPRKERLRNDRELAMAEVAPEDIYGPKLPTAPPQKPAAPEIQAEANIDDRLQQLWQQHAPKKRKAEKWVEKKCISGSEDSDASSSNESSSSDSSDDNDKRSKLSKPKKSHKGSSSKKSKKSKLKSKKKSKKSEESKHKAKKKKKKSKH.

6 disordered regions span residues 104–127, 165–233, 320–345, 370–432, 660–711, and 822–952; these read QGIR…QRRR, GWKP…DDYE, DKKP…EDNS, RSRF…KDHS, PEKV…RNKP, and VAPE…KSKH. Residues 107–123 are compositionally biased toward basic and acidic residues; the sequence is RTRDEFANEDEQKQRSD. In terms of domain architecture, G-patch spans 153-199; sequence RDKVAVRILKSMGWKPGQGVGPRQTRKEKRQATARNSKEQYLMEHYG. A compositionally biased stretch (acidic residues) spans 214–233; sequence DSNNEDEDDEDITFAPDDYE. Residues 323–333 are compositionally biased toward basic residues; that stretch reads PKQKKQQHVQQ. Composition is skewed to basic and acidic residues over residues 375–402, 414–432, and 679–691; these read PMDK…DLNP, QEEK…KDHS, and IQDK…EPSK. A compositionally biased stretch (low complexity) spans 886–896; sequence ASSSNESSSSD. 2 stretches are compositionally biased toward basic residues: residues 906–934 and 941–952; these read KLSK…KKSK and HKAKKKKKKSKH.

The protein belongs to the GPATCH1 family.

This chain is G patch domain-containing protein 1 homolog, found in Drosophila melanogaster (Fruit fly).